The sequence spans 747 residues: E3 UFM1-protein ligase 1 homolog (747 aa).

The interval glutamate 403–leucine 468 is disordered. Positions glycine 429–lysine 438 are enriched in basic residues. The segment covering glycine 439–glycine 449 has biased composition (gly residues). Residues alanine 450 to serine 465 show a composition bias toward polar residues.

It belongs to the UFL1 family.

Its function is as follows. E3 UFM1-protein ligase that mediates ufmylation of target proteins. The polypeptide is E3 UFM1-protein ligase 1 homolog (ufl-1) (Caenorhabditis briggsae).